Reading from the N-terminus, the 424-residue chain is Serine--tRNA ligase (424 aa).

231 to 233 contacts L-serine; sequence TAE. Residue 262-264 participates in ATP binding; the sequence is RAE. Glutamate 285 serves as a coordination point for L-serine. 349-352 provides a ligand contact to ATP; the sequence is EISS. Serine 385 contributes to the L-serine binding site.

Belongs to the class-II aminoacyl-tRNA synthetase family. Type-1 seryl-tRNA synthetase subfamily. In terms of assembly, homodimer. The tRNA molecule binds across the dimer.

The protein localises to the cytoplasm. The catalysed reaction is tRNA(Ser) + L-serine + ATP = L-seryl-tRNA(Ser) + AMP + diphosphate + H(+). It carries out the reaction tRNA(Sec) + L-serine + ATP = L-seryl-tRNA(Sec) + AMP + diphosphate + H(+). Its pathway is aminoacyl-tRNA biosynthesis; selenocysteinyl-tRNA(Sec) biosynthesis; L-seryl-tRNA(Sec) from L-serine and tRNA(Sec): step 1/1. Its function is as follows. Catalyzes the attachment of serine to tRNA(Ser). Is also able to aminoacylate tRNA(Sec) with serine, to form the misacylated tRNA L-seryl-tRNA(Sec), which will be further converted into selenocysteinyl-tRNA(Sec). The polypeptide is Serine--tRNA ligase (Geobacillus thermodenitrificans (strain NG80-2)).